Here is a 782-residue protein sequence, read N- to C-terminus: uncharacterized protein (782 aa).

Residues 22–50 (CRECHRLKLKCDRVWPCENCKKRGIPNLC) constitute a DNA-binding region (zn(2)-C6 fungal-type). 2 disordered regions span residues 105–126 (GEKPAEDTKDENRSQPIHDPDH) and 645–665 (VPSSRPNSKSPDDSSMRAEKA). The span at 654 to 665 (SPDDSSMRAEKA) shows a compositional bias: basic and acidic residues.

The protein localises to the nucleus. This is an uncharacterized protein from Schizosaccharomyces pombe (strain 972 / ATCC 24843) (Fission yeast).